We begin with the raw amino-acid sequence, 322 residues long: uncharacterized protein (322 aa).

The interval Met-1–Tyr-63 is disordered. A compositionally biased stretch (basic and acidic residues) spans Phe-34 to Pro-49. The C3H1-type zinc finger occupies Trp-245–Val-274. A disordered region spans residues His-278–Gln-322. A compositionally biased stretch (basic residues) spans Gly-309 to Gln-322.

This is an uncharacterized protein from Caenorhabditis elegans.